The primary structure comprises 260 residues: Tropinone reductase homolog At2g29330 (260 aa).

NADP(+) is bound at residue 13-37 (LVTGGASGIGHAIVEELAGFGAKIH). S146 is a binding site for substrate. Residue Y159 is the Proton acceptor of the active site.

This sequence belongs to the short-chain dehydrogenases/reductases (SDR) family. SDR65C subfamily.

In terms of biological role, reductase active only on small flexible lipophilic carbonyls. No activity with cyclic monoterpenes, tropinone, nitrogen-containing tropinone analogs, tropine or pseudotropine as substrate. This chain is Tropinone reductase homolog At2g29330, found in Arabidopsis thaliana (Mouse-ear cress).